A 477-amino-acid polypeptide reads, in one-letter code: Aspartyl/glutamyl-tRNA(Asn/Gln) amidotransferase subunit B (477 aa).

Belongs to the GatB/GatE family. GatB subfamily. As to quaternary structure, heterotrimer of A, B and C subunits.

It carries out the reaction L-glutamyl-tRNA(Gln) + L-glutamine + ATP + H2O = L-glutaminyl-tRNA(Gln) + L-glutamate + ADP + phosphate + H(+). The enzyme catalyses L-aspartyl-tRNA(Asn) + L-glutamine + ATP + H2O = L-asparaginyl-tRNA(Asn) + L-glutamate + ADP + phosphate + 2 H(+). In terms of biological role, allows the formation of correctly charged Asn-tRNA(Asn) or Gln-tRNA(Gln) through the transamidation of misacylated Asp-tRNA(Asn) or Glu-tRNA(Gln) in organisms which lack either or both of asparaginyl-tRNA or glutaminyl-tRNA synthetases. The reaction takes place in the presence of glutamine and ATP through an activated phospho-Asp-tRNA(Asn) or phospho-Glu-tRNA(Gln). The chain is Aspartyl/glutamyl-tRNA(Asn/Gln) amidotransferase subunit B from Methylobacillus flagellatus (strain ATCC 51484 / DSM 6875 / VKM B-1610 / KT).